Consider the following 265-residue polypeptide: uncharacterized protein (265 aa).

H7, H9, E94, H130, H155, and D205 together coordinate a divalent metal cation.

This sequence belongs to the metallo-dependent hydrolases superfamily. TatD-type hydrolase family. A divalent metal cation is required as a cofactor.

This is an uncharacterized protein from Escherichia coli O157:H7.